The primary structure comprises 567 residues: Sensor histidine kinase MtrB (567 aa).

The span at 1 to 15 shows a compositional bias: basic residues; sequence MIFGSRRRIRGRRGR. The interval 1–20 is disordered; that stretch reads MIFGSRRRIRGRRGRSGPMT. The next 2 helical transmembrane spans lie at 42 to 62 and 213 to 233; these read VVALTLGLSLAVILALGFVLT and GTMATGGLVLLVLLAGIALLV. Residues 235–287 form the HAMP domain; sequence RQVVVPVRSASRIAERFAEGHLSERMPVRGEDDMARLAVSFNDMAESLSRQIA. The Histidine kinase domain maps to 302 to 519; sequence DVSHELRTPL…CFRLTLPMVR (218 aa). H305 carries the post-translational modification Phosphohistidine; by autocatalysis. The segment covering 529-551 has biased composition (pro residues); the sequence is PMKPIPQPVLQPVAQPNPQPMPP. The segment at 529–567 is disordered; that stretch reads PMKPIPQPVLQPVAQPNPQPMPPEYKERQRPREHAEWSG. Basic and acidic residues predominate over residues 552–567; it reads EYKERQRPREHAEWSG.

As to quaternary structure, interacts with MrtA. Interacts with LpqB, probably extracytoplasmically via MtrB's sensor domain. Requires Mg(2+) as cofactor. Ca(2+) serves as cofactor. Post-translationally, the C-terminal domain (residues 234-567) autophosphorylates.

The protein localises to the cell membrane. It carries out the reaction ATP + protein L-histidine = ADP + protein N-phospho-L-histidine.. Its activity is regulated as follows. Ca(2+) ions inhibit the phosphotransfer from MtrB to MtrA. Its function is as follows. Member of the two-component regulatory system MtrA/MtrB. Probably functions as a membrane-associated protein kinase that phosphorylates MtrA in response to environmental signals. Autophosphorylates and transfers phosphate to MtrA in vitro. Overexpression of MtrA alone decreases bacterial virulence in mouse infection; co-expression of MtrA and MtrB restores normal bacterial growth, suggesting that bacterial growth in macrophages requires an optimal ratio of MtrB to MtrA. Probably plays a role in cell division. This Mycobacterium tuberculosis (strain ATCC 25618 / H37Rv) protein is Sensor histidine kinase MtrB (mtrB).